A 328-amino-acid polypeptide reads, in one-letter code: Phosphate acyltransferase (328 aa).

The protein belongs to the PlsX family. Homodimer. Probably interacts with PlsY.

The protein localises to the cytoplasm. It catalyses the reaction a fatty acyl-[ACP] + phosphate = an acyl phosphate + holo-[ACP]. Its pathway is lipid metabolism; phospholipid metabolism. Its function is as follows. Catalyzes the reversible formation of acyl-phosphate (acyl-PO(4)) from acyl-[acyl-carrier-protein] (acyl-ACP). This enzyme utilizes acyl-ACP as fatty acyl donor, but not acyl-CoA. This is Phosphate acyltransferase from Pseudothermotoga lettingae (strain ATCC BAA-301 / DSM 14385 / NBRC 107922 / TMO) (Thermotoga lettingae).